Reading from the N-terminus, the 161-residue chain is MKRAADYIEMKSPAKPEYVGIIRLTLSGIASKMGYSYDDIEDLKIAVSEACTNAVQHAYKADNNTGEVSVRFGVFEDRLEIVVADQGDSFDIQDKQKELGPYSPEHTVDQLSEGGLGLYLMETLMDEVHVQIDSGVTVSMTKFLNRERVDDGTTVQNYETN.

It belongs to the anti-sigma-factor family.

It carries out the reaction L-seryl-[protein] + ATP = O-phospho-L-seryl-[protein] + ADP + H(+). The enzyme catalyses L-threonyl-[protein] + ATP = O-phospho-L-threonyl-[protein] + ADP + H(+). In terms of biological role, negative regulator of sigma-B activity. Phosphorylates and inactivates its specific antagonist protein, RsbV. Upon phosphorylation of RsbV, RsbW is released and binds to sigma-B, thereby blocking its ability to form an RNA polymerase holoenzyme (E-sigma-B). The polypeptide is Serine-protein kinase RsbW (Bacillus licheniformis (strain ATCC 14580 / DSM 13 / JCM 2505 / CCUG 7422 / NBRC 12200 / NCIMB 9375 / NCTC 10341 / NRRL NRS-1264 / Gibson 46)).